Here is a 921-residue protein sequence, read N- to C-terminus: MTRSIGELGRRRNEDVLDDFDDFEEEIATKPATRKSRSKAVEPEPEFDEDFDEQSGNRTSAYVEEHADGIALSLVGIAIVLGAAVWLGIGGPIGTFIADIVHLAIGAGAWILPVGLIGWAVALMLRYTPERQAQGRVMLGIGVIIVCMLALIHLFAGNPAEWEGRKTAGGAIGAWIGTPLELGFSVFLAVPILLLLLFWGALKTTGISIREFIEFAGGFFGFAGFNRDEDEFDEEDDDLYGHVERELESRASGRAPSRTPSRALPKAAPRRTPPLTPPPAPVPAPAPTPARRPAASLDKYPVDDAKAEAPAEPQVKQREASTSILKKPSVTETDEFPAVTEEDLAPAPASDAVAASRESMRQAIIARSGKDPVVEKKPAAPAPVAPTPADIVSDGDSTYVLPSADLLIPGEPAKLHSETNDRMIEAITDVFSEFNVDATVTGFSRGPTVTRYEIELGPGVKVSKITNLQSNIAYAVATENVRLLTPIPGKSAVGIEVPNSDREMVRLGDVLNARATVENKDSMLIGLGKDIEGDFVSYSVQKMPHLLVAGSTGSGKSAFVNSLLVSLLTRAKPEEVRLILVDPKMVELTPYEGIPHLITPIITQPKKAAAALQWLVEEMEQRYMDMKQTRVRHIKDFNRKIKSGEIETPPGSKREYRAYPYIVCVVDELADLMMTAPKEIEESIVRITQKARAAGIHLVLATQRPSVDVVTGLIKTNVPSRLAFATSSLTDSRVILDQGGAEKLIGMGDALFIPQGAGKPQRIQGAFVTDEEIQAVVDMAKAQRQPEYTDGVTEDKASEAKKIDADIGNDLEDLLEAVELVVTSQMGSTSMLQRKLRIGFAKAGRLMDLMETRGVVGPSEGSKAREVLVKPEELETILWMLKGADPADAPKEETWDDEVAAEAEEAANTTVVQADPSKGVC.

The tract at residues 28 to 55 (ATKPATRKSRSKAVEPEPEFDEDFDEQS) is disordered. A compositionally biased stretch (acidic residues) spans 43 to 53 (PEPEFDEDFDE). The next 5 helical transmembrane spans lie at 69-89 (GIAL…WLGI), 105-125 (IGAG…ALML), 137-157 (VMLG…LFAG), 182-202 (LGFS…WGAL), and 205-225 (TGIS…FAGF). Residues 226-921 (NRDEDEFDEE…VQADPSKGVC (696 aa)) are Cytoplasmic-facing. A disordered region spans residues 246–391 (ELESRASGRA…APVAPTPADI (146 aa)). A compositionally biased stretch (pro residues) spans 271–290 (RTPPLTPPPAPVPAPAPTPA). A compositionally biased stretch (basic and acidic residues) spans 300 to 319 (YPVDDAKAEAPAEPQVKQRE). Positions 332–344 (ETDEFPAVTEEDL) are enriched in acidic residues. Low complexity predominate over residues 345 to 356 (APAPASDAVAAS). The span at 368–378 (SGKDPVVEKKP) shows a compositional bias: basic and acidic residues. The FtsK domain occupies 533–733 (GDFVSYSVQK…FATSSLTDSR (201 aa)). An ATP-binding site is contributed by 553–558 (GSGKSA).

Belongs to the FtsK/SpoIIIE/SftA family. Homohexamer. Forms a ring that surrounds DNA.

Its subcellular location is the cell membrane. Essential cell division protein that coordinates cell division and chromosome segregation. The N-terminus is involved in assembly of the cell-division machinery. The C-terminus functions as a DNA motor that moves dsDNA in an ATP-dependent manner towards the dif recombination site, which is located within the replication terminus region. Required for activation of the Xer recombinase, allowing activation of chromosome unlinking by recombination. The sequence is that of DNA translocase FtsK (ftsK) from Corynebacterium glutamicum (strain ATCC 13032 / DSM 20300 / JCM 1318 / BCRC 11384 / CCUG 27702 / LMG 3730 / NBRC 12168 / NCIMB 10025 / NRRL B-2784 / 534).